The following is a 172-amino-acid chain: RNA pyrophosphohydrolase (172 aa).

The Nudix hydrolase domain maps to 6–149 (GFRANVGIII…KRDVYRKVMK (144 aa)). Positions 38–59 (GGVDEGETPEEAMFRELYEEVG) match the Nudix box motif.

Belongs to the Nudix hydrolase family. RppH subfamily. Requires a divalent metal cation as cofactor.

Its function is as follows. Accelerates the degradation of transcripts by removing pyrophosphate from the 5'-end of triphosphorylated RNA, leading to a more labile monophosphorylated state that can stimulate subsequent ribonuclease cleavage. The chain is RNA pyrophosphohydrolase from Shewanella sediminis (strain HAW-EB3).